Reading from the N-terminus, the 366-residue chain is Histidinol-phosphate aminotransferase 2 (366 aa).

Lysine 226 carries the N6-(pyridoxal phosphate)lysine modification.

This sequence belongs to the class-II pyridoxal-phosphate-dependent aminotransferase family. Histidinol-phosphate aminotransferase subfamily. As to quaternary structure, homodimer. Requires pyridoxal 5'-phosphate as cofactor.

It catalyses the reaction L-histidinol phosphate + 2-oxoglutarate = 3-(imidazol-4-yl)-2-oxopropyl phosphate + L-glutamate. The protein operates within amino-acid biosynthesis; L-histidine biosynthesis; L-histidine from 5-phospho-alpha-D-ribose 1-diphosphate: step 7/9. The protein is Histidinol-phosphate aminotransferase 2 (hisC2) of Haemophilus influenzae (strain ATCC 51907 / DSM 11121 / KW20 / Rd).